A 441-amino-acid chain; its full sequence is Na(+)/H(+) antiporter NhaA 2 (441 aa).

12 helical membrane-spanning segments follow: residues 34-54 (VGGAVLLVASAVALVWANSPW), 77-97 (LTLGTWAADGLLAVFFLVVGL), 115-135 (ALPMAAAVGGMVVPALIFVAV), 146-166 (GWAIPTATDIAFAVAVLAVIS), 176-196 (FLLTLAVVDDLLAVTVIAVFY), 199-219 (EINLTALGLSIVPLALFALCV), 225-245 (SWWLLLPLGVATWVLMHESGV), 249-269 (VAGVLLGFTVPVLRSVAAGGP), 290-310 (VAVPVFAFFAAGVAIGGVSGL), 317-337 (PITLGIILGLVVGKPVGIFLT), 355-375 (WIDVFGVALLAGIGFTVSLLI), and 389-409 (FVKVGVLTGSLVAALIAAVLL).

The protein belongs to the NhaA Na(+)/H(+) (TC 2.A.33) antiporter family.

The protein localises to the cell membrane. It carries out the reaction Na(+)(in) + 2 H(+)(out) = Na(+)(out) + 2 H(+)(in). In terms of biological role, na(+)/H(+) antiporter that extrudes sodium in exchange for external protons. The sequence is that of Na(+)/H(+) antiporter NhaA 2 from Mycobacterium sp. (strain MCS).